A 482-amino-acid chain; its full sequence is Ubiquitin carboxyl-terminal hydrolase 6 (482 aa).

The Ubiquitin-like domain maps to 2-77; sequence PTVSVKWQKK…LMMMGTADEI (76 aa). One can recognise a USP domain in the interval 104 to 478; that stretch reads AGLVNLGNTC…MAYITMYKAR (375 aa). Residue C113 is the Nucleophile of the active site. A calmodulin-binding region spans residues 172 to 191; the sequence is SQFWMVLRKKYPQFSQLQNG. Basic and acidic residues-rich tracts occupy residues 350 to 361 and 371 to 381; these read PRQKLREEEGKK and GSKDSDVKMTD. Residues 350–407 form a disordered region; that stretch reads PRQKLREEEGKKLGLQTSAKSGSKDSDVKMTDAEASANGSGESSTVNPQEGTSSEKET. Residues 382–393 show a composition bias toward low complexity; that stretch reads AEASANGSGESS. The active-site Proton acceptor is the H430.

Belongs to the peptidase C19 family. In terms of assembly, interacts with calmodulin (CaM).

It catalyses the reaction Thiol-dependent hydrolysis of ester, thioester, amide, peptide and isopeptide bonds formed by the C-terminal Gly of ubiquitin (a 76-residue protein attached to proteins as an intracellular targeting signal).. Functionally, recognizes and hydrolyzes the peptide bond at the C-terminal Gly of ubiquitin. Involved in the processing of poly-ubiquitin precursors as well as that of ubiquitinated proteins. The protein is Ubiquitin carboxyl-terminal hydrolase 6 (UBP6) of Arabidopsis thaliana (Mouse-ear cress).